The chain runs to 426 residues: Trigger factor 1 (426 aa).

Positions 163 to 248 constitute a PPIase FKBP-type domain; that stretch reads QDTVNIDFAG…VNKLKRKEYA (86 aa).

This sequence belongs to the FKBP-type PPIase family. Tig subfamily.

Its subcellular location is the cytoplasm. It carries out the reaction [protein]-peptidylproline (omega=180) = [protein]-peptidylproline (omega=0). In terms of biological role, involved in protein export. Acts as a chaperone by maintaining the newly synthesized protein in an open conformation. Functions as a peptidyl-prolyl cis-trans isomerase. This is Trigger factor 1 from Desulfitobacterium hafniense (strain Y51).